Here is a 59-residue protein sequence, read N- to C-terminus: Ferredoxin (59 aa).

2 4Fe-4S ferredoxin-type domains span residues 2 to 30 and 31 to 59; these read GKIT…LEVN and DHVE…LKVE. [4Fe-4S] cluster contacts are provided by cysteine 12, cysteine 15, cysteine 18, cysteine 22, cysteine 41, cysteine 44, cysteine 47, and cysteine 51.

Requires [4Fe-4S] cluster as cofactor.

Ferredoxins are iron-sulfur proteins that transfer electrons in a wide variety of metabolic reactions. This is Ferredoxin from Entamoeba histolytica (strain ATCC 30459 / HM-1:IMSS / ABRM).